The chain runs to 448 residues: Phosphoglucosamine mutase (448 aa).

S100 acts as the Phosphoserine intermediate in catalysis. Residues S100, D240, D242, and D244 each contribute to the Mg(2+) site. S100 is modified (phosphoserine).

This sequence belongs to the phosphohexose mutase family. It depends on Mg(2+) as a cofactor. Activated by phosphorylation.

It carries out the reaction alpha-D-glucosamine 1-phosphate = D-glucosamine 6-phosphate. Catalyzes the conversion of glucosamine-6-phosphate to glucosamine-1-phosphate. This chain is Phosphoglucosamine mutase, found in Clostridium perfringens (strain ATCC 13124 / DSM 756 / JCM 1290 / NCIMB 6125 / NCTC 8237 / Type A).